The primary structure comprises 309 residues: Probable RuBisCO transcriptional regulator (309 aa).

One can recognise an HTH lysR-type domain in the interval 5-62 (FTLQQLRILKAIATEKSFTRAAEVLFVSQPSLSKQIKTLESRLNISLLNRENNIVSLT). The H-T-H motif DNA-binding region spans 22-41 (FTRAAEVLFVSQPSLSKQIK).

It belongs to the LysR transcriptional regulatory family.

The protein resides in the plastid. It localises to the chloroplast. Its function is as follows. Trans-acting transcriptional regulator of RuBisCO genes (rbcL and rbcS) expression. The polypeptide is Probable RuBisCO transcriptional regulator (rbcR) (Trieres chinensis (Marine centric diatom)).